The following is a 214-amino-acid chain: Potassium-transporting ATPase KdpC subunit (214 aa).

A helical membrane pass occupies residues 17 to 37 (LWVITALIYPFSMIAIGQILF).

Belongs to the KdpC family. As to quaternary structure, the system is composed of three essential subunits: KdpA, KdpB and KdpC.

It is found in the cell inner membrane. In terms of biological role, part of the high-affinity ATP-driven potassium transport (or Kdp) system, which catalyzes the hydrolysis of ATP coupled with the electrogenic transport of potassium into the cytoplasm. This subunit acts as a catalytic chaperone that increases the ATP-binding affinity of the ATP-hydrolyzing subunit KdpB by the formation of a transient KdpB/KdpC/ATP ternary complex. The sequence is that of Potassium-transporting ATPase KdpC subunit from Microcystis aeruginosa (strain NIES-843 / IAM M-2473).